Consider the following 137-residue polypeptide: Endoribonuclease YbeY (137 aa).

3 residues coordinate Zn(2+): histidine 105, histidine 109, and aspartate 115.

Belongs to the endoribonuclease YbeY family. The cofactor is Zn(2+).

It is found in the cytoplasm. Functionally, single strand-specific metallo-endoribonuclease involved in late-stage 70S ribosome quality control and in maturation of the 3' terminus of the 16S rRNA. The sequence is that of Endoribonuclease YbeY from Chlorobium luteolum (strain DSM 273 / BCRC 81028 / 2530) (Pelodictyon luteolum).